The sequence spans 88 residues: Small ribosomal subunit protein uS15 (88 aa).

This sequence belongs to the universal ribosomal protein uS15 family. Part of the 30S ribosomal subunit. Forms a bridge to the 50S subunit in the 70S ribosome, contacting the 23S rRNA.

Functionally, one of the primary rRNA binding proteins, it binds directly to 16S rRNA where it helps nucleate assembly of the platform of the 30S subunit by binding and bridging several RNA helices of the 16S rRNA. Forms an intersubunit bridge (bridge B4) with the 23S rRNA of the 50S subunit in the ribosome. This is Small ribosomal subunit protein uS15 from Francisella tularensis subsp. holarctica (strain LVS).